The primary structure comprises 62 residues: Cytotoxin 7 (62 aa).

The signal sequence occupies residues 1-2; sequence YT. 4 disulfide bridges follow: cysteine 5–cysteine 23, cysteine 16–cysteine 40, cysteine 44–cysteine 55, and cysteine 56–cysteine 61.

This sequence belongs to the three-finger toxin family. Short-chain subfamily. Type IA cytotoxin sub-subfamily. In terms of assembly, monomer in solution; Homodimer and oligomer in the presence of negatively charged lipids forming a pore with a size ranging between 20 and 30 Angstroms. In terms of tissue distribution, expressed by the venom gland.

It localises to the secreted. Its subcellular location is the target cell membrane. Functionally, shows cytolytic activity on many different cells by forming pore in lipid membranes. In vivo, increases heart rate or kills the animal by cardiac arrest. In addition, it binds to heparin with high affinity, interacts with Kv channel-interacting protein 1 (KCNIP1) in a calcium-independent manner, and binds to integrin alpha-V/beta-3 (ITGAV/ITGB3) with moderate affinity. In Naja sputatrix (Malayan spitting cobra), this protein is Cytotoxin 7.